A 333-amino-acid polypeptide reads, in one-letter code: Olfactory receptor 1078 (333 aa).

Residues 1–25 are Extracellular-facing; the sequence is MDSSNRTRVSEFLLLGFVENKDLQP. Asparagine 5 carries N-linked (GlcNAc...) asparagine glycosylation. The chain crosses the membrane as a helical span at residues 26 to 50; sequence LIYGLFLSMYLVTVIGNISIIVAII. Over 51-57 the chain is Cytoplasmic; that stretch reads SDPCLHT. Residues 58 to 79 form a helical membrane-spanning segment; the sequence is PMYFFLSNLSFVDICFISTTVP. The Extracellular segment spans residues 80 to 100; it reads KMLVNIQTQNNVITYAGCITQ. An intrachain disulfide couples cysteine 97 to cysteine 189. A helical membrane pass occupies residues 101-120; that stretch reads IYFFLLFVELDNFLLTIMAY. Topologically, residues 121–139 are cytoplasmic; sequence DRYVAICHPMHYTVIMNYK. Residues 140–158 traverse the membrane as a helical segment; it reads LCGFLVLVSWIVSVLHALF. Topologically, residues 159–196 are extracellular; the sequence is QSLMMLALPFCTHLEIPHYFCEPNQVIQLTCSDAFLND. Residues 197 to 219 form a helical membrane-spanning segment; that stretch reads LVIYFTLVLLATVPLAGIFYSYF. Residues 220-236 lie on the Cytoplasmic side of the membrane; sequence KIVSSICAISSVHGKYK. A helical membrane pass occupies residues 237-260; it reads AFSTCASHLSVVSLFYCTGLGVYL. Residues 261–272 are Extracellular-facing; sequence SSAANNSSQASA. A helical membrane pass occupies residues 273-292; that stretch reads TASVMYTVVTPMVNPFIYSL. Residues 293–333 are Cytoplasmic-facing; it reads RNKDVKSVLKKTLCEEVIRSPPSLLHFFLVLCHLPCFIFCY.

Belongs to the G-protein coupled receptor 1 family. In terms of tissue distribution, olfactory epithelium.

It is found in the cell membrane. Functionally, odorant receptor. This chain is Olfactory receptor 1078 (Olr1078), found in Rattus norvegicus (Rat).